The primary structure comprises 346 residues: Zinc finger CCCH domain-containing protein 28 (346 aa).

The tract at residues methionine 1–arginine 99 is disordered. Residues aspartate 17–serine 41 are compositionally biased toward low complexity. Positions arginine 62 to glycine 86 are enriched in basic residues. 6 C3H1-type zinc fingers span residues aspartate 103–proline 131, aspartate 138–proline 165, lysine 181–proline 209, glutamate 211–alanine 237, asparagine 282–leucine 308, and asparagine 314–alanine 340.

This chain is Zinc finger CCCH domain-containing protein 28, found in Oryza sativa subsp. japonica (Rice).